We begin with the raw amino-acid sequence, 122 residues long: Large ribosomal subunit protein uL14 (122 aa).

Belongs to the universal ribosomal protein uL14 family. In terms of assembly, part of the 50S ribosomal subunit. Forms a cluster with proteins L3 and L19. In the 70S ribosome, L14 and L19 interact and together make contacts with the 16S rRNA in bridges B5 and B8.

Binds to 23S rRNA. Forms part of two intersubunit bridges in the 70S ribosome. The polypeptide is Large ribosomal subunit protein uL14 (Paracidovorax citrulli (strain AAC00-1) (Acidovorax citrulli)).